We begin with the raw amino-acid sequence, 366 residues long: Probable neutral protease 2 homolog B (366 aa).

The N-terminal stretch at Met1–Gly19 is a signal peptide. Positions Phe20–Arg189 are excised as a propeptide. Cystine bridges form between Cys197/Cys267, Cys274/Cys292, and Cys306/Cys366. A Zn(2+)-binding site is contributed by His317. Glu318 is an active-site residue. Zn(2+)-binding residues include His321 and Asp332.

The protein belongs to the peptidase M35 family. Requires Zn(2+) as cofactor.

The protein resides in the secreted. It carries out the reaction Preferential cleavage of bonds with hydrophobic residues in P1'. Also 3-Asn-|-Gln-4 and 8-Gly-|-Ser-9 bonds in insulin B chain.. Functionally, probable secreted metalloprotease that shows high activities on basic nuclear substrates such as histone and protamine. May be involved in virulence. In Trichophyton rubrum (Athlete's foot fungus), this protein is Probable neutral protease 2 homolog B (NpII-B).